Reading from the N-terminus, the 475-residue chain is ATP synthase subunit beta (475 aa).

156 to 163 (GGAGVGKT) serves as a coordination point for ATP.

The protein belongs to the ATPase alpha/beta chains family. In terms of assembly, F-type ATPases have 2 components, CF(1) - the catalytic core - and CF(0) - the membrane proton channel. CF(1) has five subunits: alpha(3), beta(3), gamma(1), delta(1), epsilon(1). CF(0) has three main subunits: a(1), b(2) and c(9-12). The alpha and beta chains form an alternating ring which encloses part of the gamma chain. CF(1) is attached to CF(0) by a central stalk formed by the gamma and epsilon chains, while a peripheral stalk is formed by the delta and b chains.

Its subcellular location is the cell membrane. It catalyses the reaction ATP + H2O + 4 H(+)(in) = ADP + phosphate + 5 H(+)(out). In terms of biological role, produces ATP from ADP in the presence of a proton gradient across the membrane. The catalytic sites are hosted primarily by the beta subunits. This is ATP synthase subunit beta from Mycoplasma pneumoniae (strain ATCC 29342 / M129 / Subtype 1) (Mycoplasmoides pneumoniae).